A 348-amino-acid chain; its full sequence is Glycerol-1-phosphate dehydrogenase [NAD(P)+] (348 aa).

NAD(+) contacts are provided by residues 94–98 (GKVID) and threonine 116. Residue aspartate 121 participates in substrate binding. Serine 125 serves as a coordination point for NAD(+). Aspartate 168 serves as a coordination point for substrate. Residues aspartate 168 and histidine 248 each coordinate Zn(2+). Histidine 252 serves as a coordination point for substrate. Histidine 264 contacts Zn(2+).

Belongs to the glycerol-1-phosphate dehydrogenase family. As to quaternary structure, homooctamer. Zn(2+) serves as cofactor.

It localises to the cytoplasm. It catalyses the reaction sn-glycerol 1-phosphate + NAD(+) = dihydroxyacetone phosphate + NADH + H(+). The enzyme catalyses sn-glycerol 1-phosphate + NADP(+) = dihydroxyacetone phosphate + NADPH + H(+). It functions in the pathway membrane lipid metabolism; glycerophospholipid metabolism. In terms of biological role, catalyzes the NAD(P)H-dependent reduction of dihydroxyacetonephosphate (DHAP or glycerone phosphate) to glycerol 1-phosphate (G1P). The G1P thus generated is used as the glycerophosphate backbone of phospholipids in the cellular membranes of Archaea. The chain is Glycerol-1-phosphate dehydrogenase [NAD(P)+] from Methanosphaera stadtmanae (strain ATCC 43021 / DSM 3091 / JCM 11832 / MCB-3).